Reading from the N-terminus, the 564-residue chain is Tripeptidyl-peptidase 1 (564 aa).

The first 19 residues, 1-19 (MGLQACLLGLFALILSGKC), serve as a signal peptide directing secretion. The propeptide at 20–195 (SYSPEPDQRR…PEPQVTGTVG (176 aa)) is removed in mature form. Residues cysteine 111 and cysteine 122 are joined by a disulfide bond. Residues 199 to 564 (GVTPSVIRKR…PALPKTLLNP (366 aa)) enclose the Peptidase S53 domain. Asparagine 210 and asparagine 222 each carry an N-linked (GlcNAc...) asparagine glycan. Catalysis depends on charge relay system residues glutamate 272 and aspartate 276. N-linked (GlcNAc...) asparagine glycans are attached at residues asparagine 286, asparagine 313, and asparagine 443. Disulfide bonds link cysteine 365-cysteine 527 and cysteine 523-cysteine 538. The active-site Charge relay system is the serine 475. 2 residues coordinate Ca(2+): aspartate 518 and valine 519. 3 residues coordinate Ca(2+): glycine 540, glycine 542, and aspartate 544.

Monomer. Interacts with CLN5. Interacts with CLN3. Ca(2+) is required as a cofactor. In terms of processing, activated by autocatalytic proteolytical processing upon acidification. N-glycosylation is required for processing and activity.

It localises to the lysosome. It is found in the melanosome. The enzyme catalyses Release of an N-terminal tripeptide from a polypeptide, but also has endopeptidase activity.. Functionally, lysosomal serine protease with tripeptidyl-peptidase I activity. May act as a non-specific lysosomal peptidase which generates tripeptides from the breakdown products produced by lysosomal proteinases. Requires substrates with an unsubstituted N-terminus. The sequence is that of Tripeptidyl-peptidase 1 (TPP1) from Pongo abelii (Sumatran orangutan).